A 116-amino-acid polypeptide reads, in one-letter code: UPF0342 protein RBAM_010030 (116 aa).

The protein belongs to the UPF0342 family.

The sequence is that of UPF0342 protein RBAM_010030 from Bacillus velezensis (strain DSM 23117 / BGSC 10A6 / LMG 26770 / FZB42) (Bacillus amyloliquefaciens subsp. plantarum).